The following is a 213-amino-acid chain: HTH-type transcriptional regulator SrpR (213 aa).

An HTH tetR-type domain is found at Glu-10–Leu-70. The segment at residues Thr-33–Phe-52 is a DNA-binding region (H-T-H motif).

Functionally, in conjunction with SrpS represses the srpABC operon. The polypeptide is HTH-type transcriptional regulator SrpR (srpR) (Pseudomonas putida (Arthrobacter siderocapsulatus)).